We begin with the raw amino-acid sequence, 404 residues long: Rhomboid-related protein 3 (404 aa).

2 consecutive EF-hand domains span residues 34–69 and 70–105; these read APED…HSSK and LDPH…KRSN. 7 helical membrane-spanning segments follow: residues 164–184, 218–238, 250–270, 274–294, 303–325, 338–358, and 371–391; these read WFMI…GVSL, IFMH…LLVG, IGLV…VADM, VVGS…NIVM, FKLL…AVWL, PSFV…VVVL, and WWIF…WNIF. The active-site Nucleophile is Ser-278. The active site involves His-343.

It belongs to the peptidase S54 family.

It localises to the membrane. The enzyme catalyses Cleaves type-1 transmembrane domains using a catalytic dyad composed of serine and histidine that are contributed by different transmembrane domains.. Its function is as follows. May be involved in regulated intramembrane proteolysis and the subsequent release of functional polypeptides from their membrane anchors. The sequence is that of Rhomboid-related protein 3 (RHBDL3) from Homo sapiens (Human).